A 189-amino-acid polypeptide reads, in one-letter code: PRELI domain-containing protein 2 (189 aa).

A PRELI/MSF1 domain is found at 1 to 187 (MGVSVDVHQV…LLKEQCGAPL (187 aa)).

The protein is PRELI domain-containing protein 2 (PRELID2) of Homo sapiens (Human).